The following is a 135-amino-acid chain: Large ribosomal subunit protein uL16 (135 aa).

The protein belongs to the universal ribosomal protein uL16 family. Part of the 50S ribosomal subunit.

Functionally, binds 23S rRNA and is also seen to make contacts with the A and possibly P site tRNAs. This Desulforapulum autotrophicum (strain ATCC 43914 / DSM 3382 / VKM B-1955 / HRM2) (Desulfobacterium autotrophicum) protein is Large ribosomal subunit protein uL16.